Reading from the N-terminus, the 205-residue chain is LexA repressor (205 aa).

A DNA-binding region (H-T-H motif) is located at residues Arg28 to Lys48. Active-site for autocatalytic cleavage activity residues include Ser122 and Lys159.

This sequence belongs to the peptidase S24 family. As to quaternary structure, homodimer.

It carries out the reaction Hydrolysis of Ala-|-Gly bond in repressor LexA.. Functionally, represses a number of genes involved in the response to DNA damage (SOS response), including recA and lexA. In the presence of single-stranded DNA, RecA interacts with LexA causing an autocatalytic cleavage which disrupts the DNA-binding part of LexA, leading to derepression of the SOS regulon and eventually DNA repair. This is LexA repressor from Shewanella loihica (strain ATCC BAA-1088 / PV-4).